A 440-amino-acid chain; its full sequence is Oligodendrocyte-myelin glycoprotein (440 aa).

A signal peptide spans 1–24; that stretch reads MEYQILKMSSCLFILLFLTPGILC. The region spanning 25 to 55 is the LRRNT domain; it reads ICPLQCTCTERHRHVDCSGRNLTTLPPGLQE. Asn-45 and Asn-61 each carry an N-linked (GlcNAc...) asparagine glycan. LRR repeat units follow at residues 56-78, 79-100, 101-121, 124-145, 147-168, 169-189, 192-213, and 216-239; these read NIIH…TPYT, NLRT…LPRS, LWNM…DTAY, NLKY…KNTL, SLEV…MPSK, LHIV…TLIN, NLTH…SFDQ, and QLQE…TYLL. An N-linked (GlcNAc...) asparagine glycan is attached at Asn-103. N-linked (GlcNAc...) asparagine glycans are attached at residues Asn-152, Asn-176, Asn-189, Asn-192, and Asn-234. Ser/Thr-rich repeat units follow at residues 229-270, 271-292, 293-335, 336-377, and 378-416; these read CDHK…YPTP, PGFT…INSL, SMVT…VAYP, EDTP…PPSP, and VTLS…TRPP. N-linked (GlcNAc...) asparagine glycosylation is found at Asn-364 and Asn-389. Ser-417 carries the GPI-anchor amidated serine lipid modification. Residues 418–440 constitute a propeptide, removed in mature form; it reads AASAWKVNASLLLMLNAVVMLAG. A glycan (N-linked (GlcNAc...) asparagine) is linked at Asn-425.

In terms of assembly, binds to RTN4R. In terms of processing, O-glycosylated in its Ser/Thr-rich repeat domain. Oligodendrocytes and myelin of the central nervous system.

It localises to the cell membrane. Functionally, cell adhesion molecule contributing to the interactive process required for myelination in the central nervous system. The sequence is that of Oligodendrocyte-myelin glycoprotein (Omg) from Mus musculus (Mouse).